The primary structure comprises 464 residues: F-box/FBD/LRR-repeat protein At1g80470 (464 aa).

Residues 15–62 (DWISGLADDLLLQILSKVPTRESVFTSRMSKRWRNLWRHVPALDLDSS) enclose the F-box domain. LRR repeat units follow at residues 96-122 (EEHC…TILS), 123-150 (KVNI…TLYS), 152-178 (VFDA…KFDG), 197-222 (IITH…KLES), 223-249 (MRED…SITD), and 273-298 (DAED…TISA). The FBD domain maps to 359–413 (KEEINLSLVPHCFESSLEYVQLKVPITVSETSSKMELAIYFVRNCSVLKKLMLNE).

In Arabidopsis thaliana (Mouse-ear cress), this protein is F-box/FBD/LRR-repeat protein At1g80470.